The following is a 177-amino-acid chain: Parathyroid hormone-related protein (177 aa).

Residues 1 to 24 (MLWRLVQQWSVAVFLLSYSVPSCG) form the signal peptide. The propeptide occupies 25–34 (RSVEELGRRL). The important for receptor binding stretch occupies residues 57–68 (RFFLHHLIAEIH). The segment at 74-149 (ATSEVSPNSK…KRRTRSAWLT (76 aa)) is disordered. The span at 76 to 90 (SEVSPNSKPAPNTKN) shows a compositional bias: polar residues. The short motif at 108–129 (TNKVETYKEQPLKTPGKKKKSK) is the Nuclear localization signal element. Basic and acidic residues predominate over residues 109-118 (NKVETYKEQP). The segment covering 122–132 (PGKKKKSKPGK) has biased composition (basic residues).

Belongs to the parathyroid hormone family. As to quaternary structure, PTHrP interacts with PTH1R (via N-terminal extracellular domain). Post-translationally, there are several secretory forms, including osteostatin, arising from endoproteolytic cleavage of the initial translation product. Each of these secretory forms is believed to have one or more of its own receptors that mediates the normal paracrine, autocrine and endocrine actions.

It is found in the secreted. The protein localises to the cytoplasm. Its subcellular location is the nucleus. Its function is as follows. Neuroendocrine peptide which is a critical regulator of cellular and organ growth, development, migration, differentiation and survival and of epithelial calcium ion transport. Acts by binding to its receptor, PTH1R, activating G protein-coupled receptor signaling. Regulates endochondral bone development and epithelial-mesenchymal interactions during the formation of the mammary glands and teeth. Required for skeletal homeostasis. Promotes mammary mesenchyme differentiation and bud outgrowth by modulating mesenchymal cell responsiveness to BMPs. Up-regulates BMPR1A expression in the mammary mesenchyme and this increases the sensitivity of these cells to BMPs and allows them to respond to BMP4 in a paracrine and/or autocrine fashion. BMP4 signaling in the mesenchyme, in turn, triggers epithelial outgrowth and augments MSX2 expression, which causes the mammary mesenchyme to inhibit hair follicle formation within the nipple sheath. Functionally, potent inhibitor of osteoclastic bone resorption. In Bos taurus (Bovine), this protein is Parathyroid hormone-related protein (PTHLH).